Consider the following 1086-residue polypeptide: Tyrosine-protein kinase receptor svh-2 (1086 aa).

A signal peptide spans Met-1–Gly-34. Residues Gly-35 to Lys-651 lie on the Extracellular side of the membrane. Asn-276, Asn-299, Asn-461, Asn-554, and Asn-617 each carry an N-linked (GlcNAc...) asparagine glycan. Residues Ile-652 to Tyr-672 traverse the membrane as a helical segment. At Met-673 to Val-1086 the chain is on the cytoplasmic side. The region spanning Val-735 to Val-996 is the Protein kinase domain. ATP contacts are provided by residues Ile-741–Val-749 and Lys-767. The active-site Proton acceptor is Asp-858. Tyr-890 carries the phosphotyrosine modification. The interval Ala-1056–Val-1086 is disordered. Residues Asp-1061 to Val-1086 are compositionally biased toward polar residues.

Belongs to the protein kinase superfamily. Tyr protein kinase family. As to quaternary structure, interacts (via cytoplasmic domain) with mlk-1. Interacts with shc-1 (via SH2 domain). May interact (when tyrosine-phosphorylated) with tns-1 (via SH2 domain). May be autophosphorylated on Tyr-890 following dimerization. In terms of tissue distribution, expressed in body wall and vulva muscles, pharynx, intestine, excretory canals, distal tip cells and some neurons. Expressed in D-type motor neurons upon axon injury.

It localises to the cell membrane. It catalyses the reaction L-tyrosyl-[protein] + ATP = O-phospho-L-tyrosyl-[protein] + ADP + H(+). In terms of biological role, receptor tyrosine kinase which may phosphorylate mlk-1, a component of the mlk-1, mek-1 and kgb-1 pathway. Involved in axon regeneration after injury by promoting the generation of productive and stable growth cones. The protein is Tyrosine-protein kinase receptor svh-2 of Caenorhabditis elegans.